We begin with the raw amino-acid sequence, 341 residues long: Protein FAM50A (341 aa).

2 disordered regions span residues 1–27 and 80–147; these read MAQY…EREQ and LVKE…EIEE. The span at 80–115 shows a compositional bias: basic and acidic residues; it reads LVKEREKQLAKKEQSKELQLKLEKQKEKKRKEEQKR. The span at 125-147 shows a compositional bias: acidic residues; it reads DEGEDEEEEEEEEEEEEEDEIEE.

It belongs to the FAM50 family.

The protein resides in the nucleus. In terms of biological role, probably involved in the regulation of pre-mRNA splicing. This chain is Protein FAM50A (fam50a), found in Danio rerio (Zebrafish).